A 459-amino-acid polypeptide reads, in one-letter code: Serine carboxypeptidase-like 27 (459 aa).

An N-terminal signal peptide occupies residues 1-20 (MDYSFLLIILLLTISTSCCA). 3 disulfides stabilise this stretch: C91/C344, C252/C264, and C288/C312. Residue N142 is glycosylated (N-linked (GlcNAc...) asparagine). S184 is a catalytic residue. Residues N289 and N333 are each glycosylated (N-linked (GlcNAc...) asparagine). Catalysis depends on residues D381 and H433.

Belongs to the peptidase S10 family. Ubiquitous.

It localises to the secreted. Probable carboxypeptidase. This chain is Serine carboxypeptidase-like 27 (SCPL27), found in Arabidopsis thaliana (Mouse-ear cress).